Here is a 224-residue protein sequence, read N- to C-terminus: Cysteine S-methyltransferase NleE (224 aa).

An interaction with host proteins TAB2, TAB3 and ZRANB3 region spans residues 49–52 (GITR). The S-adenosyl-L-methionine site is built by Ala-92, Ser-98, Arg-107, Gln-111, Tyr-204, and Glu-208.

This sequence belongs to the NleE/OspZ family. Monomer.

It localises to the secreted. The protein localises to the host nucleus. The enzyme catalyses L-cysteinyl-[protein] + S-adenosyl-L-methionine = S-methyl-L-cysteinyl-[protein] + S-adenosyl-L-homocysteine + H(+). Cysteine methyltransferase effector that inhibits host cell NF-kappa-B activation by preventing nuclear translocation of host protein RELA/p65. Acts by mediating cysteine methylation of host proteins TAB2 and TAB3: methylation of a conserved cysteine residue of the RanBP2-type zinc finger (NZF) of TAB2 and TAB3 disrupts zinc-binding, thereby inactivating the ubiquitin chain-binding activity of TAB2 and TAB3, leading to NF-kappa-B inactivation. Also mediates cysteine methylation of host protein ZRANB3, inactivating its ability to bind ubiquitin chains. This is Cysteine S-methyltransferase NleE from Escherichia coli O157:H7.